We begin with the raw amino-acid sequence, 321 residues long: NADH-ubiquinone oxidoreductase chain 1 (321 aa).

8 helical membrane-spanning segments follow: residues 9–29, 75–95, 106–126, 151–171, 177–197, 219–239, 256–276, and 297–317; these read ITNS…LTLL, ILFT…WAPM, LGLL…LWSG, TLGL…LMLF, HMWL…STLA, VEFS…NILF, PQLF…LFLW, and YLPL…ALCG.

It belongs to the complex I subunit 1 family.

It localises to the mitochondrion inner membrane. The catalysed reaction is a ubiquinone + NADH + 5 H(+)(in) = a ubiquinol + NAD(+) + 4 H(+)(out). In terms of biological role, core subunit of the mitochondrial membrane respiratory chain NADH dehydrogenase (Complex I) that is believed to belong to the minimal assembly required for catalysis. Complex I functions in the transfer of electrons from NADH to the respiratory chain. The immediate electron acceptor for the enzyme is believed to be ubiquinone. The sequence is that of NADH-ubiquinone oxidoreductase chain 1 (MT-ND1) from Lycodon semicarinatus (Ryukyu odd-tooth snake).